Here is a 337-residue protein sequence, read N- to C-terminus: 2-oxoglutarate-dependent dioxygenase 19 (337 aa).

A disordered region spans residues 1 to 25 (MVAPSRLPSHEEQSAAAAADGSATP). Positions 179–283 (NLESCFQILV…RMSFVSLIGP (105 aa)) constitute a Fe2OG dioxygenase domain. Residues histidine 208, aspartate 210, and histidine 264 each contribute to the Fe cation site. Arginine 274 lines the 2-oxoglutarate pocket.

This sequence belongs to the iron/ascorbate-dependent oxidoreductase family. Fe(2+) is required as a cofactor. The cofactor is L-ascorbate. As to expression, expressed in shoots.

It localises to the cytoplasm. The catalysed reaction is melatonin + 2-oxoglutarate + O2 = 2-hydroxymelatonin + succinate + CO2. In terms of biological role, involved in melatonin degradation. Catalyzes the hydroxylation of melatonin to produce 2-hydroxymelatonin. This is 2-oxoglutarate-dependent dioxygenase 19 from Oryza sativa subsp. japonica (Rice).